A 353-amino-acid polypeptide reads, in one-letter code: DNA-directed RNA polymerase subunit alpha (353 aa).

The segment at 1 to 226 is alpha N-terminal domain (alpha-NTD); it reads MLISQRPTLT…ELFGLARELN (226 aa). The tract at residues 241–353 is alpha C-terminal domain (alpha-CTD); that stretch reads ADHIASFGLP…TEDYAETEQL (113 aa). A disordered region spans residues 326–353; it reads ATGTWSDTDAGSFGDAEGTEDYAETEQL. Residues 342-353 show a composition bias toward acidic residues; the sequence is EGTEDYAETEQL.

Belongs to the RNA polymerase alpha chain family. In terms of assembly, homodimer. The RNAP catalytic core consists of 2 alpha, 1 beta, 1 beta' and 1 omega subunit. When a sigma factor is associated with the core the holoenzyme is formed, which can initiate transcription.

The enzyme catalyses RNA(n) + a ribonucleoside 5'-triphosphate = RNA(n+1) + diphosphate. Its function is as follows. DNA-dependent RNA polymerase catalyzes the transcription of DNA into RNA using the four ribonucleoside triphosphates as substrates. In Rhodococcus jostii (strain RHA1), this protein is DNA-directed RNA polymerase subunit alpha.